The following is a 436-amino-acid chain: T-box transcription factor TBX6 (436 aa).

A DNA-binding region (T-box) is located at residues 100 to 273 (LWKEFSSVGT…ANPFAKGFRE (174 aa)). Over residues 271–284 (FRENGRNCKRERDA) the composition is skewed to basic and acidic residues. 2 disordered regions span residues 271–339 (FREN…APAP) and 360–379 (PSHLPTRSPSFPEAPDSGRS). Over residues 325–339 (EQAPAPGEATAAPAP) the composition is skewed to low complexity.

In terms of assembly, forms a dimeric complex with DNA (in vitro). As to expression, expressed in fetal tail bud, posterior spinal tissue, intervertebral disk and testis. Also expressed in adult testis, kidney, lung, muscle and thymus.

Its subcellular location is the nucleus. Functionally, T-box transcription factor that plays an essential role in the determination of the fate of axial stem cells: neural vs mesodermal. Acts in part by down-regulating, a specific enhancer (N1) of SOX2, to inhibit neural development. Seems to play also an essential role in left/right axis determination and acts through effects on Notch signaling around the node as well as through an effect on the morphology and motility of the nodal cilia. The chain is T-box transcription factor TBX6 (TBX6) from Homo sapiens (Human).